Here is a 214-residue protein sequence, read N- to C-terminus: ATP-dependent Clp protease proteolytic subunit (214 aa).

The active-site Nucleophile is serine 110. Histidine 135 is an active-site residue.

The protein belongs to the peptidase S14 family. As to quaternary structure, fourteen ClpP subunits assemble into 2 heptameric rings which stack back to back to give a disk-like structure with a central cavity, resembling the structure of eukaryotic proteasomes.

The protein resides in the cytoplasm. The enzyme catalyses Hydrolysis of proteins to small peptides in the presence of ATP and magnesium. alpha-casein is the usual test substrate. In the absence of ATP, only oligopeptides shorter than five residues are hydrolyzed (such as succinyl-Leu-Tyr-|-NHMec, and Leu-Tyr-Leu-|-Tyr-Trp, in which cleavage of the -Tyr-|-Leu- and -Tyr-|-Trp bonds also occurs).. Functionally, cleaves peptides in various proteins in a process that requires ATP hydrolysis. Has a chymotrypsin-like activity. Plays a major role in the degradation of misfolded proteins. The sequence is that of ATP-dependent Clp protease proteolytic subunit from Legionella pneumophila (strain Corby).